The sequence spans 406 residues: MLNISKIFEEVKVMKNFTLNFGPQHPAAHGVLRLIVELESENVVRVEPHIGLLHRGTEKLIEGKTYTQALPYFDRLDYVSMNVQEHAYSLAVERLYLDSLDIELEIPQRAKVIRVLFSEITRVLNHIMATTTHAMDVGALTPFLWAFEEREKLMEFYERVSGARMHAAYIRPGGVAFDLPMNISEDIYKFVIQYRKRLEEIEDMLINNRIWKQRLVDIGIVSAEEALNYGFTGPLLRGAGIVYDIRKNYPYDDYDKYDFKIIIGEENNSYTRFIIRMKEMYQSLAIIEQALNNLRPGLIKLEGVNITAPDRAFVKKDMESCINHFKFFSEGFIIPANENYTIVEAPKGEFGIYLNANDTAKPYRCRIKAPGFLHLQGLNMMSKDHLLADVVTLIGTQDIVFGEVDR.

The protein belongs to the complex I 49 kDa subunit family. Complex I is composed of 45 different subunits. Component of the iron-sulfur (IP) fragment of the enzyme.

Its subcellular location is the mitochondrion inner membrane. The enzyme catalyses a ubiquinone + NADH + 5 H(+)(in) = a ubiquinol + NAD(+) + 4 H(+)(out). Functionally, core subunit of the mitochondrial membrane respiratory chain NADH dehydrogenase (Complex I) that is believed to belong to the minimal assembly required for catalysis. Complex I functions in the transfer of electrons from NADH to the respiratory chain. The immediate electron acceptor for the enzyme is believed to be ubiquinone. The protein is NADH-ubiquinone oxidoreductase 49 kDa subunit (nad7) of Dictyostelium citrinum (Slime mold).